A 784-amino-acid chain; its full sequence is E3 UFM1-protein ligase 1 homolog (784 aa).

Positions 398 to 414 are enriched in basic and acidic residues; it reads QEVDHGVMEEEKADKRE. Positions 398 to 472 are disordered; sequence QEVDHGVMEE…ASNKKGGKDP (75 aa).

The protein belongs to the UFL1 family.

Functionally, E3 UFM1-protein ligase that mediates ufmylation of target proteins. In Anopheles gambiae (African malaria mosquito), this protein is E3 UFM1-protein ligase 1 homolog.